A 122-amino-acid polypeptide reads, in one-letter code: Large ribosomal subunit protein uL14 (122 aa).

Belongs to the universal ribosomal protein uL14 family. Part of the 50S ribosomal subunit. Forms a cluster with proteins L3 and L19. In the 70S ribosome, L14 and L19 interact and together make contacts with the 16S rRNA in bridges B5 and B8.

Binds to 23S rRNA. Forms part of two intersubunit bridges in the 70S ribosome. This Sulfurovum sp. (strain NBC37-1) protein is Large ribosomal subunit protein uL14.